Here is a 310-residue protein sequence, read N- to C-terminus: Olfactory receptor 2A1/2A42 (310 aa).

Residues 1 to 24 (MGENQTMVTEFLLLGFLLGPRIQM) are Extracellular-facing. N-linked (GlcNAc...) asparagine glycosylation is present at N4. Residues 25-48 (LLFGLFSLFYIFTLLGNGAILGLI) form a helical membrane-spanning segment. The Cytoplasmic segment spans residues 49–56 (SLDSRLHT). A helical membrane pass occupies residues 57–78 (PMYFFLSHLAVVDIAYTRNTVP). Residues 79–99 (QMLANLLHPAKPISFAGCMTQ) are Extracellular-facing. C96 and C188 are oxidised to a cystine. Residues 100–119 (TFLCLSFGHSECLLLVLMSY) traverse the membrane as a helical segment. Residues 120–138 (DRYVAICHPLRYSVIMTWR) lie on the Cytoplasmic side of the membrane. Residues 139 to 157 (VCITLAVTSWTCGSLLALA) form a helical membrane-spanning segment. The Extracellular portion of the chain corresponds to 158 to 195 (HVVLILRLPFSGPHEINHFFCEILSVLRLACADTWLNQ). A helical membrane pass occupies residues 196-218 (VVIFAACVFFLVGPPSLVLVSYS). Residues 219–235 (HILAAILRIQSGEGRRK) lie on the Cytoplasmic side of the membrane. The helical transmembrane segment at 236 to 258 (AFSTCSSHLCVVGLFFGSAIIMY) threads the bilayer. Residues 259–271 (MAPKSRHPEEQQK) lie on the Extracellular side of the membrane. The helical transmembrane segment at 272 to 291 (VFFLFYSFFNPTLNPLIYSL) threads the bilayer. Over 292–310 (RNGEVKGALRRALGKESHS) the chain is Cytoplasmic.

This sequence belongs to the G-protein coupled receptor 1 family.

The protein resides in the cell membrane. Odorant receptor. The protein is Olfactory receptor 2A1/2A42 (OR2A1) of Homo sapiens (Human).